The primary structure comprises 250 residues: Triosephosphate isomerase (250 aa).

9–11 (NWK) lines the substrate pocket. H94 functions as the Electrophile in the catalytic mechanism. E166 (proton acceptor) is an active-site residue. Residues G172, S212, and 233–234 (GG) each bind substrate.

The protein belongs to the triosephosphate isomerase family. As to quaternary structure, homodimer.

The protein resides in the cytoplasm. It carries out the reaction D-glyceraldehyde 3-phosphate = dihydroxyacetone phosphate. The protein operates within carbohydrate biosynthesis; gluconeogenesis. It participates in carbohydrate degradation; glycolysis; D-glyceraldehyde 3-phosphate from glycerone phosphate: step 1/1. Functionally, involved in the gluconeogenesis. Catalyzes stereospecifically the conversion of dihydroxyacetone phosphate (DHAP) to D-glyceraldehyde-3-phosphate (G3P). This is Triosephosphate isomerase from Treponema denticola (strain ATCC 35405 / DSM 14222 / CIP 103919 / JCM 8153 / KCTC 15104).